A 383-amino-acid polypeptide reads, in one-letter code: Succinyl-diaminopimelate desuccinylase (383 aa).

Residue histidine 73 coordinates Zn(2+). Aspartate 75 is a catalytic residue. Aspartate 107 is a Zn(2+) binding site. Glutamate 141 functions as the Proton acceptor in the catalytic mechanism. Zn(2+) contacts are provided by glutamate 142, glutamate 170, and histidine 356.

This sequence belongs to the peptidase M20A family. DapE subfamily. As to quaternary structure, homodimer. Zn(2+) is required as a cofactor. It depends on Co(2+) as a cofactor.

It catalyses the reaction N-succinyl-(2S,6S)-2,6-diaminopimelate + H2O = (2S,6S)-2,6-diaminopimelate + succinate. Its pathway is amino-acid biosynthesis; L-lysine biosynthesis via DAP pathway; LL-2,6-diaminopimelate from (S)-tetrahydrodipicolinate (succinylase route): step 3/3. Its function is as follows. Catalyzes the hydrolysis of N-succinyl-L,L-diaminopimelic acid (SDAP), forming succinate and LL-2,6-diaminopimelate (DAP), an intermediate involved in the bacterial biosynthesis of lysine and meso-diaminopimelic acid, an essential component of bacterial cell walls. The sequence is that of Succinyl-diaminopimelate desuccinylase from Pseudomonas paraeruginosa (strain DSM 24068 / PA7) (Pseudomonas aeruginosa (strain PA7)).